Reading from the N-terminus, the 196-residue chain is MSDKATDIANLLAPTVVSLGLELLGVEYLPAPGGATLRLYIDVPLAEQPERIINVDDCERVSREVSAQMDVEDPISGNYTLEVSSPGVDRPLFNLEQFGRHLGESAKVTLKLPQDNRRRLQGRIEAIDEAAGAITFIVDKAEVVVSADNIDKARIMPDWVALGLAPSKPTGPAPKRPKPKTNSSSNEPAAKKPRAE.

The interval G163 to E196 is disordered.

It belongs to the RimP family.

It localises to the cytoplasm. Its function is as follows. Required for maturation of 30S ribosomal subunits. The chain is Ribosome maturation factor RimP from Stenotrophomonas maltophilia (strain R551-3).